A 204-amino-acid polypeptide reads, in one-letter code: MHFLKQYLFYSPRRMKTQEIKNVTLEDVDFLKNLGVWVEIYHHLEKGLLQQCFNLVKKNMEALYRQSSFGWDDSEKLKEMEMEKLEYICIFEKTSKKLVGFLSFEDTVEAGLTCLYIYEIQLDEHIRGRNVGKWLLKNASILAYRRNLKYIFLTVFSANLNALNFYHHFDFVPHESSPQEKKFRSGKVIHPDYYILYTKSRKDW.

One can recognise an N-acetyltransferase domain in the interval 39-202 (EIYHHLEKGL…YYILYTKSRK (164 aa)). Substrate-binding positions include Y64, 107–109 (TVE), and Y118. Residues 120–122 (IQL) and 128–133 (GRNVGK) each bind acetyl-CoA. T154 contributes to the substrate binding site. Residue N159 coordinates acetyl-CoA. S176 serves as a coordination point for substrate.

Belongs to the acetyltransferase family. NAA40 subfamily.

It localises to the cytoplasm. The protein localises to the nucleus. It catalyses the reaction N-terminal L-seryl-[histone H4] + acetyl-CoA = N-terminal N(alpha)-acetyl-L-seryl-[histone H4] + CoA + H(+). The enzyme catalyses N-terminal L-seryl-[histone H2A] + acetyl-CoA = N-terminal N(alpha)-acetyl-L-seryl-[histone H2A] + CoA + H(+). Its function is as follows. N-alpha-acetyltransferase that specifically mediates the acetylation of the N-terminal residues of histones H4 and H2A. In Schizosaccharomyces pombe (strain 972 / ATCC 24843) (Fission yeast), this protein is N-alpha-acetyltransferase 40.